The sequence spans 65 residues: Prokaryotic ubiquitin-like protein UBact (65 aa).

Polar residues predominate over residues 1-17 (MEVNMPTTEQGQKNKQM). Residues 1-65 (MEVNMPTTEQ…ARRYRQRTGE (65 aa)) are disordered. The span at 35 to 65 (KVEKPNTEEILKRMRKVDPDQARRYRQRTGE) shows a compositional bias: basic and acidic residues. Glu-65 is covalently cross-linked (Isoglutamyl lysine isopeptide (Glu-Lys) (interchain with K-? in acceptor proteins)).

It belongs to the ubiquitin-like protein UBact family.

In terms of biological role, may function as a protein modifier covalently attached to lysine residues of substrate proteins. This may serve to target the modified proteins for degradation by proteasomes. This is Prokaryotic ubiquitin-like protein UBact from Methylacidiphilum infernorum (isolate V4) (Methylokorus infernorum (strain V4)).